The primary structure comprises 331 residues: Adenosine deaminase (331 aa).

Zn(2+) is bound by residues H12 and H14. Substrate-binding residues include H14, D16, and G170. H197 contacts Zn(2+). E200 (proton donor) is an active-site residue. Position 278 (D278) interacts with Zn(2+).

Belongs to the metallo-dependent hydrolases superfamily. Adenosine and AMP deaminases family. Adenosine deaminase subfamily. Requires Zn(2+) as cofactor.

The enzyme catalyses adenosine + H2O + H(+) = inosine + NH4(+). It carries out the reaction 2'-deoxyadenosine + H2O + H(+) = 2'-deoxyinosine + NH4(+). In terms of biological role, catalyzes the hydrolytic deamination of adenosine and 2-deoxyadenosine. The polypeptide is Adenosine deaminase (Clostridium botulinum (strain 657 / Type Ba4)).